The primary structure comprises 231 residues: Ribosyldihydronicotinamide dehydrogenase [quinone] (231 aa).

FAD-binding positions include H12 and 18–21; that span reads FNGS. Residue S80 is modified to Phosphoserine. Residue 104–107 participates in FAD binding; it reads LYWF. 127-129 contributes to the substrate binding site; the sequence is FDI. Residues 148–151 and Y156 each bind FAD; that span reads TTGG. Positions 174 and 178 each coordinate Zn(2+). E194 contributes to the FAD binding site. S197 carries the phosphoserine modification. R201 serves as a coordination point for FAD. C223 lines the Zn(2+) pocket.

The protein belongs to the NAD(P)H dehydrogenase (quinone) family. As to quaternary structure, homodimer. The cofactor is Zn(2+). Requires FAD as cofactor.

The protein localises to the cytoplasm. The enzyme catalyses 1-(beta-D-ribofuranosyl)-1,4-dihydronicotinamide + a quinone + H(+) = beta-nicotinamide D-riboside + a quinol. The enzyme apparently serves as a quinone reductase in connection with conjugation reactions of hydroquinones involved in detoxification pathways as well as in biosynthetic processes such as the vitamin K-dependent gamma-carboxylation of glutamate residues in prothrombin synthesis. The chain is Ribosyldihydronicotinamide dehydrogenase [quinone] (NQO2) from Pongo abelii (Sumatran orangutan).